Consider the following 144-residue polypeptide: Large ribosomal subunit protein uL11 (144 aa).

The protein belongs to the universal ribosomal protein uL11 family. Part of the ribosomal stalk of the 50S ribosomal subunit. Interacts with L10 and the large rRNA to form the base of the stalk. L10 forms an elongated spine to which L12 dimers bind in a sequential fashion forming a multimeric L10(L12)X complex. In terms of processing, one or more lysine residues are methylated.

In terms of biological role, forms part of the ribosomal stalk which helps the ribosome interact with GTP-bound translation factors. This Rhodococcus erythropolis (strain PR4 / NBRC 100887) protein is Large ribosomal subunit protein uL11.